Here is a 195-residue protein sequence, read N- to C-terminus: Transcription repressor OFP17 (195 aa).

The 61-residue stretch at 130–190 (EDNAVEDACR…SRFYGELCRD (61 aa)) folds into the OVATE domain.

It localises to the nucleus. Transcriptional repressor that may regulate multiple aspects of plant growth and development through the regulation of BEL1-LIKE (BLH) and KNOX TALE (KNAT) homeodomain transcription factors. This is Transcription repressor OFP17 (OFP17) from Arabidopsis thaliana (Mouse-ear cress).